The primary structure comprises 297 residues: tRNA(Ile)-lysidine synthase (297 aa).

Residue 16 to 21 (SGGSDS) participates in ATP binding.

Belongs to the tRNA(Ile)-lysidine synthase family.

The protein resides in the cytoplasm. The enzyme catalyses cytidine(34) in tRNA(Ile2) + L-lysine + ATP = lysidine(34) in tRNA(Ile2) + AMP + diphosphate + H(+). Ligates lysine onto the cytidine present at position 34 of the AUA codon-specific tRNA(Ile) that contains the anticodon CAU, in an ATP-dependent manner. Cytidine is converted to lysidine, thus changing the amino acid specificity of the tRNA from methionine to isoleucine. The protein is tRNA(Ile)-lysidine synthase of Mesomycoplasma hyopneumoniae (strain 232) (Mycoplasma hyopneumoniae).